The chain runs to 496 residues: Probable cytosol aminopeptidase (496 aa).

The Mn(2+) site is built by K262 and D267. K274 is an active-site residue. 3 residues coordinate Mn(2+): D285, D344, and E346. R348 is a catalytic residue.

This sequence belongs to the peptidase M17 family. Mn(2+) is required as a cofactor.

It localises to the cytoplasm. The enzyme catalyses Release of an N-terminal amino acid, Xaa-|-Yaa-, in which Xaa is preferably Leu, but may be other amino acids including Pro although not Arg or Lys, and Yaa may be Pro. Amino acid amides and methyl esters are also readily hydrolyzed, but rates on arylamides are exceedingly low.. It carries out the reaction Release of an N-terminal amino acid, preferentially leucine, but not glutamic or aspartic acids.. In terms of biological role, presumably involved in the processing and regular turnover of intracellular proteins. Catalyzes the removal of unsubstituted N-terminal amino acids from various peptides. In Rhizobium etli (strain CIAT 652), this protein is Probable cytosol aminopeptidase.